The primary structure comprises 293 residues: Proximal tail tube connector protein (293 aa).

2 disordered regions span residues 106-166 (VGVK…FKRD) and 192-240 (QIEE…NDKL). Residues 112-126 (TKNDTDRNDNRDVKQ) are compositionally biased toward basic and acidic residues. Polar residues predominate over residues 127–160 (DLTSNGTSSTDAKQNDTSKTTGNEKSSGSGSITD). The span at 193 to 205 (IEEHNENKKRDTK) shows a compositional bias: basic and acidic residues. Over residues 206 to 231 (TSNTTDTTSNTTGTSTLDSDSKTSNK) the composition is skewed to low complexity.

It belongs to the phi29likevirus proximal tail tube connector protein family.

Its subcellular location is the virion. In terms of biological role, forms the proximal part of the tail tube. The protein is Proximal tail tube connector protein (11) of Bacillus phage PZA (Bacteriophage PZA).